The sequence spans 477 residues: Aspartyl/glutamyl-tRNA(Asn/Gln) amidotransferase subunit B (477 aa).

It belongs to the GatB/GatE family. GatB subfamily. Heterotrimer of A, B and C subunits.

It catalyses the reaction L-glutamyl-tRNA(Gln) + L-glutamine + ATP + H2O = L-glutaminyl-tRNA(Gln) + L-glutamate + ADP + phosphate + H(+). The enzyme catalyses L-aspartyl-tRNA(Asn) + L-glutamine + ATP + H2O = L-asparaginyl-tRNA(Asn) + L-glutamate + ADP + phosphate + 2 H(+). Allows the formation of correctly charged Asn-tRNA(Asn) or Gln-tRNA(Gln) through the transamidation of misacylated Asp-tRNA(Asn) or Glu-tRNA(Gln) in organisms which lack either or both of asparaginyl-tRNA or glutaminyl-tRNA synthetases. The reaction takes place in the presence of glutamine and ATP through an activated phospho-Asp-tRNA(Asn) or phospho-Glu-tRNA(Gln). This is Aspartyl/glutamyl-tRNA(Asn/Gln) amidotransferase subunit B from Legionella pneumophila subsp. pneumophila (strain Philadelphia 1 / ATCC 33152 / DSM 7513).